The sequence spans 726 residues: Transcription factor 12 (726 aa).

9 disordered regions span residues 27–75 (SPPV…SRGF), 89–223 (LVSH…TFFD), 243–267 (YGGM…HSHD), 289–309 (SSFH…HTPP), 345–367 (PDHT…SPLA), 380–409 (TASG…YENS), 501–532 (MGSV…SSEL), 558–624 (VENQ…ERRM), and 694–726 (EEEK…MGHL). Polar residues predominate over residues 29–47 (PVNSGKNRPTTLGSSQFTA). Over residues 55–74 (SQASWASGGQSSPSFESSRG) the composition is skewed to low complexity. 3 stretches are compositionally biased toward polar residues: residues 145–157 (PGKS…SYTG), 249–263 (GSSS…YSNL), and 291–309 (FHRS…HTPP). Residues 348–359 (TSSSFPSNPSTP) show a composition bias toward low complexity. 2 stretches are compositionally biased toward polar residues: residues 389–409 (GTTQ…YENS) and 510–532 (GSLN…SSEL). Positions 559–575 (ENQDKDDMHDSHASDDL) are enriched in basic and acidic residues. Positions 592 to 603 (SSRPSCELSCSS) are enriched in low complexity. Basic and acidic residues predominate over residues 612–624 (PEQKAERERERRM). The bHLH domain occupies 621-674 (ERRMANNARERLRVRDINEAFKELGRMCQLHLKSEKPQTKLLILHQAVAVILSL). The class A specific domain stretch occupies residues 676–699 (QQVRERNLNPKAACLKRREEEKVS). A compositionally biased stretch (polar residues) spans 717–726 (TDTSNPMGHL).

As to quaternary structure, efficient DNA binding requires dimerization with another bHLH protein.

It is found in the nucleus. Its function is as follows. Transcriptional regulator. Involved in the initiation of neuronal differentiation. Activates transcription by binding to the E box (5'-CANNTG-3'). May be involved in the functional network that regulates the development of the GnRH axis. The polypeptide is Transcription factor 12 (tcf12) (Danio rerio (Zebrafish)).